Reading from the N-terminus, the 238-residue chain is Capsular polysaccharide phosphotransferase eps5J (238 aa).

Belongs to the stealth family.

This is Capsular polysaccharide phosphotransferase eps5J (eps5J) from Streptococcus thermophilus.